Reading from the N-terminus, the 313-residue chain is Ribosomal RNA small subunit methyltransferase H (313 aa).

S-adenosyl-L-methionine contacts are provided by residues 35–37 (GGH), D55, F79, D101, and Q108.

Belongs to the methyltransferase superfamily. RsmH family.

It is found in the cytoplasm. It carries out the reaction cytidine(1402) in 16S rRNA + S-adenosyl-L-methionine = N(4)-methylcytidine(1402) in 16S rRNA + S-adenosyl-L-homocysteine + H(+). Specifically methylates the N4 position of cytidine in position 1402 (C1402) of 16S rRNA. This Shigella sonnei (strain Ss046) protein is Ribosomal RNA small subunit methyltransferase H.